The primary structure comprises 657 residues: Interferon-induced GTP-binding protein Mx1 (657 aa).

The residue at position 1 (Met-1) is an N-acetylmethionine. The Dynamin-type G domain maps to 63–336; it reads DLALPAIAVI…LITHICKTLP (274 aa). The interval 73–80 is G1 motif; that stretch reads GDQSSGKS. Residue 73 to 80 coordinates GTP; it reads GDQSSGKS. The G2 motif stretch occupies residues 98-100; the sequence is VTR. The segment at 174 to 177 is G3 motif; that stretch reads DLPG. Residues 174–178 and 243–246 contribute to the GTP site; these read DLPGI and TKPD. The interval 243-246 is G4 motif; that stretch reads TKPD. Residues 275–278 are G5 motif; it reads KCRG. A bundle signaling element (BSE) region spans residues 337–362; sequence LLENQIKENHEKITEELQKYGSDVPE. The segment at 362 to 529 is middle domain; it reads EDEHEKMFFL…HFQMEQIVYC (168 aa). The interval 363–627 is stalk; the sequence is DEHEKMFFLI…KDTYSWLLKE (265 aa). Over residues 540–551 the composition is skewed to basic and acidic residues; that stretch reads RVREKDSDEEKK. Residues 540-559 form a disordered region; sequence RVREKDSDEEKKKKTSSMSH. The tract at residues 550-553 is critical for lipid-binding; it reads KKKK. The region spanning 569 to 657 is the GED domain; sequence LSEILEHLLA…ARRRLAKFPG (89 aa).

It belongs to the TRAFAC class dynamin-like GTPase superfamily. Dynamin/Fzo/YdjA family. As to quaternary structure, homooligomer. Oligomerizes into multimeric filamentous or ring-like structures by virtue of its stalk domain. Oligomerization is critical for GTPase activity, protein stability, and recognition of viral target structures. Interacts with TRPC1, TRPC3, TRPC4, TRPC5, TRPC6 and TRPC7. Interacts with HSPA5. Interacts with TUBB/TUBB5. Interacts with DDX39A and DDX39B. ISGylated.

It localises to the cytoplasm. Its subcellular location is the endoplasmic reticulum membrane. It is found in the perinuclear region. Interferon-induced dynamin-like GTPase with antiviral activity. In Canis lupus familiaris (Dog), this protein is Interferon-induced GTP-binding protein Mx1 (MX1).